The sequence spans 101 residues: Phosphoribosyl-AMP cyclohydrolase (101 aa).

Residue Asp71 participates in Mg(2+) binding. Residue Cys72 coordinates Zn(2+). Mg(2+) contacts are provided by Asp73 and Asp75. Cys88 and Cys95 together coordinate Zn(2+).

This sequence belongs to the PRA-CH family. In terms of assembly, homodimer. The cofactor is Mg(2+). Zn(2+) is required as a cofactor.

The protein resides in the cytoplasm. It carries out the reaction 1-(5-phospho-beta-D-ribosyl)-5'-AMP + H2O = 1-(5-phospho-beta-D-ribosyl)-5-[(5-phospho-beta-D-ribosylamino)methylideneamino]imidazole-4-carboxamide. It functions in the pathway amino-acid biosynthesis; L-histidine biosynthesis; L-histidine from 5-phospho-alpha-D-ribose 1-diphosphate: step 3/9. Functionally, catalyzes the hydrolysis of the adenine ring of phosphoribosyl-AMP. The chain is Phosphoribosyl-AMP cyclohydrolase from Bacillus cereus (strain AH820).